The chain runs to 924 residues: DNA repair and recombination protein RDH54 (924 aa).

Positions 1-10 (MQIPKYENKP) are enriched in basic and acidic residues. Disordered stretches follow at residues 1–21 (MQIPKYENKPFKPPRRVGSNK) and 155–183 (EALSQNMGNPSPPTTSTTETVPSTKNDGG). The segment covering 168–178 (TTSTTETVPST) has biased composition (low complexity). A Helicase ATP-binding domain is found at 299–487 (LENDSDISGC…FTIIDFINPG (189 aa)). Residue 346–353 (IPLTGLCK) coordinates ATP. The DEGH box motif lies at 472–475 (NDLN). Lys615 is covalently cross-linked (Glycyl lysine isopeptide (Lys-Gly) (interchain with G-Cter in ubiquitin)). The 160-residue stretch at 631–790 (KLKVLMTLLE…DSEMRNKESS (160 aa)) folds into the Helicase C-terminal domain.

This sequence belongs to the SNF2/RAD54 helicase family. Interacts with RAD51 and DMC1.

The protein resides in the nucleus. It catalyses the reaction ATP + H2O = ADP + phosphate + H(+). Its function is as follows. Involved in the recombinational repair of double-strand breaks (DSB) in DNA during mitosis and meiosis. Has DNA dependent ATPase activity. Promotes D-loop (displacement loop) formation with RAD51 recombinase. Modifies the topology of double-stranded DNA during the D-loop reaction to facilitate the invasion of the homologous duplex molecule by the initiating single-stranded DNA substrate. Required for adaptation from G2/M checkpoint arrest induced by a double strand break, by participating in monitoring the extent of single-stranded DNA produced by resection of DNA ends. This role is distinct from its roles in recombination. Promotes colocalization of RAD51 and DMC1 during meiotic recombination. Involved in crossover interference. The chain is DNA repair and recombination protein RDH54 (RDH54) from Saccharomyces cerevisiae (strain JAY291) (Baker's yeast).